The primary structure comprises 69 residues: Putative membrane protein insertion efficiency factor (69 aa).

It belongs to the UPF0161 family.

It localises to the cell inner membrane. Could be involved in insertion of integral membrane proteins into the membrane. This Syntrophotalea carbinolica (strain DSM 2380 / NBRC 103641 / GraBd1) (Pelobacter carbinolicus) protein is Putative membrane protein insertion efficiency factor.